The following is a 139-amino-acid chain: NAD(P) transhydrogenase subunit alpha part 2 (139 aa).

3 helical membrane passes run 49–69, 78–98, and 107–127; these read FWWL…VVWS, LMGV…IATG, and VLGF…FIVT.

In terms of assembly, complex of an alpha and a beta chain; in Rhodospirillum, the alpha chain seems to be made of two subunits.

It is found in the cell inner membrane. The catalysed reaction is NAD(+) + NADPH + H(+)(in) = NADH + NADP(+) + H(+)(out). In terms of biological role, the transhydrogenation between NADH and NADP is coupled to respiration and ATP hydrolysis and functions as a proton pump across the membrane. The polypeptide is NAD(P) transhydrogenase subunit alpha part 2 (pntAB) (Rhodospirillum rubrum (strain ATCC 11170 / ATH 1.1.1 / DSM 467 / LMG 4362 / NCIMB 8255 / S1)).